The chain runs to 117 residues: Acylphosphatase (117 aa).

One can recognise an Acylphosphatase-like domain in the interval 21–107 (RWRFRIRGLV…TGADWFEIRP (87 aa)). Catalysis depends on residues R36 and N54.

This sequence belongs to the acylphosphatase family.

The catalysed reaction is an acyl phosphate + H2O = a carboxylate + phosphate + H(+). In Synechococcus sp. (strain RCC307), this protein is Acylphosphatase (acyP).